We begin with the raw amino-acid sequence, 498 residues long: Glutamate--tRNA ligase (498 aa).

The 'HIGH' region motif lies at 12–22 (PSPTGHLHIGN). Residues 259–263 (KLSKR) carry the 'KMSKS' region motif. Lysine 262 serves as a coordination point for ATP.

The protein belongs to the class-I aminoacyl-tRNA synthetase family. Glutamate--tRNA ligase type 1 subfamily. As to quaternary structure, monomer.

It is found in the cytoplasm. It catalyses the reaction tRNA(Glu) + L-glutamate + ATP = L-glutamyl-tRNA(Glu) + AMP + diphosphate. In terms of biological role, catalyzes the attachment of glutamate to tRNA(Glu) in a two-step reaction: glutamate is first activated by ATP to form Glu-AMP and then transferred to the acceptor end of tRNA(Glu). The protein is Glutamate--tRNA ligase of Limosilactobacillus fermentum (strain NBRC 3956 / LMG 18251) (Lactobacillus fermentum).